Reading from the N-terminus, the 529-residue chain is MRFNDITRGSGLEQHGITNPNLIYWTSPTSVLYEQVVRRGEGLISHLGALTVKTGHYTGRAANDKFIVDEPESSSRINWGKVNRPFPPESFDHLYKKMTSYMQGRDLFVQDCFAGASPEHRIPVRIITERAWHALFARNMFLRATQEELLTHNTEFTVIDLPAFHAQPKVDGTNSEAFIIINFARKLVIIGGTSYAGEIKKSIFTVLNYLLPQKGVMSMHCSANAGEKGEVAIFFGLSGTGKTTLSAAPNRLLIGDDEHGWDDAGVFNFEGGCYAKVINLSPQSEPEIYQCTRKFGTILENVAIDTISRRIDLDDASFTENTRASYPITHIPNIVGEGCGGHPNHVIMLTCDAFGVLPPIARLTPAQAMYHFLSGYTAKVAGTEAGVTEPQATFSACFGAPFMALRPSLYADLLGKKIASHKVSCWLVNTGWSGGGPGIGGRMKIAYSRALVNAALDGTLGAGSFVKDSVFGLDIPSACPGLPADILNPRNVWSDKSAYDATAHKLVEMFRHNFEQFKATTSPEIASVL.

R60, Y195, and K201 together coordinate substrate. Residues K201, H220, and 236–244 (GLSGTGKTT) each bind ATP. Positions 201 and 220 each coordinate Mn(2+). D257 contacts Mn(2+). ATP is bound by residues E285, R323, and S448. R323 contacts substrate.

This sequence belongs to the phosphoenolpyruvate carboxykinase (ATP) family. Mn(2+) serves as cofactor.

Its subcellular location is the cytoplasm. The catalysed reaction is oxaloacetate + ATP = phosphoenolpyruvate + ADP + CO2. It functions in the pathway carbohydrate biosynthesis; gluconeogenesis. Its function is as follows. Involved in the gluconeogenesis. Catalyzes the conversion of oxaloacetate (OAA) to phosphoenolpyruvate (PEP) through direct phosphoryl transfer between the nucleoside triphosphate and OAA. In Geobacter sp. (strain M21), this protein is Phosphoenolpyruvate carboxykinase (ATP).